The primary structure comprises 885 residues: Exosome complex component 10 (885 aa).

A Glycyl lysine isopeptide (Lys-Gly) (interchain with G-Cter in SUMO2) cross-link involves residue lysine 19. One can recognise a 3'-5' exonuclease domain in the interval 289 to 455; that stretch reads HFISSLDELV…YIYDKMRLEM (167 aa). Aspartate 313, glutamate 315, aspartate 371, and aspartate 440 together coordinate Mg(2+). The HRDC domain occupies 503-583; it reads NTQQLTAFQL…QQAREMPLLK (81 aa). Residue lysine 583 forms a Glycyl lysine isopeptide (Lys-Gly) (interchain with G-Cter in SUMO1); alternate linkage. Residue lysine 583 forms a Glycyl lysine isopeptide (Lys-Gly) (interchain with G-Cter in SUMO2); alternate linkage. Lysine 710 is covalently cross-linked (Glycyl lysine isopeptide (Lys-Gly) (interchain with G-Cter in SUMO2)). Basic and acidic residues-rich tracts occupy residues 776–794 and 804–816; these read AAKK…EQKQ and KPKD…KEFT. The segment at 776-885 is disordered; that stretch reads AAKKRERATS…RGFRYNWPQR (110 aa). Serine 821 is subject to Phosphoserine. Residues lysine 826, lysine 833, and lysine 859 each participate in a glycyl lysine isopeptide (Lys-Gly) (interchain with G-Cter in SUMO2) cross-link. Residues 831–848 are compositionally biased toward polar residues; that stretch reads NSKSKVSSQFDPNKQTPS. A compositionally biased stretch (polar residues) spans 861 to 871; sequence SVGNKSMSFPT. Lysine 873 participates in a covalent cross-link: Glycyl lysine isopeptide (Lys-Gly) (interchain with G-Cter in SUMO2).

The protein belongs to the exosome component 10/RRP6 family. In terms of assembly, component of the RNA exosome complex. The catalytically inactive RNA exosome core complex (Exo-9) associates with the catalytic subunit EXOSC10/RRP6 (via its N-terminus). Exo-9 may associate with DIS3 to form the nucleolar exosome complex, or DIS3L to form the cytoplasmic exosome complex. The RNA exosome complex interacts with cofactors C1D/RRP47, MPHOSPH6/MPP6 and MTREX/MTR4. Interacts with MTREX; the interaction with MTREX mediates the association of MTREX with nuclear RNA exosomes. Part of the small subunit (SSU) processome, composed of more than 70 proteins and the RNA chaperone small nucleolar RNA (snoRNA) U3. Interacts with ALYREF/THOC4. Interacts with DHX36; this interaction occurs in a RNase-insensitive manner. Interacts with NRDE2. Interacts (via C-terminus) with USP36 (via C-terminus); the interaction is facilitated by the association with RNA and promotes sumoylation of EXOSC10. The cofactor is Mg(2+). In terms of processing, sumoylated by USP36; sumoylation does not significantly affect EXOSC10 nucleolar localization and association with core exosome and USP36, but regulates the nucleolar RNA exosome activity in rRNA processing by promoting binding of EXOSC10 to pre-rRNAs. Effects of sumoylation on EXOSC10 levels vary between different studies. Sumoylation of EXOSC10 is required for the modulation of EXOSC10 effects on cellular protein translation and cell proliferation. Sumoylation is promoted by mild hypothermia.

It is found in the cytoplasm. The protein resides in the nucleus. It localises to the nucleolus. The protein localises to the nucleoplasm. Arginine-rich dipeptide repeat proteins expressed from C9orf72-derived repeat RNA interact with EXOSC10 and inhibit its ability to promote degradation of this RNA. In terms of biological role, catalytic component of the RNA exosome complex which has 3'-&gt;5' exoribonuclease activity and participates in a multitude of cellular RNA processing and degradation events. In the nucleus, the RNA exosome complex is involved in proper maturation of stable RNA species such as rRNA, snRNA and snoRNA, in the elimination of RNA processing by-products and non-coding 'pervasive' transcripts, such as antisense RNA species and promoter-upstream transcripts (PROMPTs), and of mRNAs with processing defects, thereby limiting or excluding their export to the cytoplasm. Part of the small subunit (SSU) processome, first precursor of the small eukaryotic ribosomal subunit. During the assembly of the SSU processome in the nucleolus, many ribosome biogenesis factors, an RNA chaperone and ribosomal proteins associate with the nascent pre-rRNA and work in concert to generate RNA folding, modifications, rearrangements and cleavage as well as targeted degradation of pre-ribosomal RNA by the RNA exosome. The RNA exosome may be involved in Ig class switch recombination (CSR) and/or Ig variable region somatic hypermutation (SHM) by targeting AICDA deamination activity to transcribed dsDNA substrates. In the cytoplasm, the RNA exosome complex is involved in general mRNA turnover and specifically degrades inherently unstable mRNAs containing AU-rich elements (AREs) within their 3' untranslated regions, and in RNA surveillance pathways, preventing translation of aberrant mRNAs. It seems to be involved in degradation of histone mRNA. EXOSC10 is required for nucleolar localization of C1D and probably mediates the association of MTREX, C1D and MPHOSPH6 with the RNA exosome involved in the maturation of 5.8S rRNA. Plays a role in the recruitment of replication protein A complex (RPA) and RAD51 to DNA double-strand breaks caused by irradiation, contributing to DNA repair by homologous recombination. Regulates levels of damage-induced RNAs in order to prevent DNA-RNA hybrid formation at DNA double-strand breaks and limit DNA end resection after damage. Plays a role in oocyte development, maturation and survival. Required for normal testis development and mitotic division of spermatogonia. Plays a role in proper embryo development. Required for global protein translation. Required for cell proliferation. Regulates metabolism of C9orf72-derived repeat RNA that can be translated into toxic dipeptide repeat proteins. In Homo sapiens (Human), this protein is Exosome complex component 10.